A 702-amino-acid polypeptide reads, in one-letter code: Solute carrier organic anion transporter family member 1B3 (702 aa).

Topologically, residues 1–28 are cytoplasmic; that stretch reads MDQHQHLNKTAESASSEKKKTRRCNGFK. Residues 29 to 48 form a helical membrane-spanning segment; that stretch reads MFLAALSFSYIAKALGGIIM. The Extracellular portion of the chain corresponds to 49–67; sequence KISITQIERRFDISSSLAG. A helical transmembrane segment spans residues 68-88; sequence LIDGSFEIGNLLVIVFVSYFG. Residues 89-94 are Cytoplasmic-facing; it reads SKLHRP. Residues 95–119 traverse the membrane as a helical segment; the sequence is KLIGIGCLLMGTGSILTSLPHFFMG. At 120 to 168 the chain is on the extracellular side; it reads YYRYSKETHINPSENSTSSLSTCLINQTLSFNGTSPEIVEKDCVKESGS. 3 N-linked (GlcNAc...) asparagine glycosylation sites follow: asparagine 134, asparagine 145, and asparagine 151. The helical transmembrane segment at 169–197 threads the bilayer; the sequence is HMWIYVFMGNMLRGIGETPIVPLGISYID. The Cytoplasmic portion of the chain corresponds to 198–216; sequence DFAKEGHSSLYLGSLNAIG. A helical transmembrane segment spans residues 217–237; sequence MIGPVIGFALGSLFAKMYVDI. Residues 238-255 lie on the Extracellular side of the membrane; that stretch reads GYVDLSTIRITPKDSRWV. A helical membrane pass occupies residues 256-280; it reads GAWWLGFLVSGLFSIISSIPFFFLP. At 281–331 the chain is on the cytoplasmic side; sequence KNPNKPQKERKISLSLHVLKTNDDRNQTANLTNQGKNVTKNVTGFFQSLKS. Serine 293 and serine 295 each carry phosphoserine. A helical transmembrane segment spans residues 332–353; it reads ILTNPLYVIFLLLTLLQVSSFI. Residues 354–373 lie on the Extracellular side of the membrane; sequence GSFTYVFKYMEQQYGQSASH. A helical transmembrane segment spans residues 374–397; sequence ANFLLGIITIPTVATGMFLGGFII. Topologically, residues 398–401 are cytoplasmic; that stretch reads KKFK. A helical membrane pass occupies residues 402 to 425; sequence LSLVGIAKFSFLTSMISFLFQLLY. Topologically, residues 426–537 are extracellular; it reads FPLICESKSV…NTCTRKFFIY (112 aa). Asparagine 445 is a glycosylation site (N-linked (GlcNAc...) asparagine). In terms of domain architecture, Kazal-like spans 453-508; it reads DVPLSYCNSECNCDESQWEPVCGNNGITYLSPCLAGCKSSSGIKKHTVFYNCSCVE. Disulfide bonds link cysteine 459/cysteine 489, cysteine 465/cysteine 485, and cysteine 474/cysteine 506. 2 N-linked (GlcNAc...) asparagine glycosylation sites follow: asparagine 503 and asparagine 516. The helical transmembrane segment at 538 to 560 threads the bilayer; that stretch reads VAIQVINSLFSATGGTTFILLTV. The Cytoplasmic portion of the chain corresponds to 561-569; the sequence is KIVQPELKA. The helical transmembrane segment at 570 to 595 threads the bilayer; that stretch reads LAMGFQSMVIRTLGGILAPIYFGALI. Topologically, residues 596–629 are extracellular; sequence DKTCMKWSTNSCGAQGACRIYNSVFFGRVYLGLS. A helical transmembrane segment spans residues 630–647; the sequence is IALRFPALVLYIVFIFAM. Residues 648 to 695 are Cytoplasmic-facing; the sequence is KKKFQGKDTKASDNERKVMDEANLEFLNNGEHFVPSAGTDSKTCNLDM. A Phosphoserine modification is found at serine 683.

This sequence belongs to the organo anion transporter (TC 2.A.60) family. Post-translationally, N-glycosylated. As to expression, highly expressed in liver, in particular at the basolateral membrane of hepatocytes near the central vein. Expressed in the placenta. In testis, primarily localized to the basal membrane of Sertoli cells and weakly expressed in Leydig cells and within the tubules.

It is found in the basolateral cell membrane. It localises to the basal cell membrane. It catalyses the reaction estrone 3-sulfate(out) + hydrogencarbonate(in) = estrone 3-sulfate(in) + hydrogencarbonate(out). It carries out the reaction 17beta-estradiol 17-O-(beta-D-glucuronate)(out) = 17beta-estradiol 17-O-(beta-D-glucuronate)(in). The catalysed reaction is taurocholate(out) = taurocholate(in). The enzyme catalyses estrone 3-sulfate(out) = estrone 3-sulfate(in). It catalyses the reaction dehydroepiandrosterone 3-sulfate(out) = dehydroepiandrosterone 3-sulfate(in). It carries out the reaction leukotriene C4(out) = leukotriene C4(in). The catalysed reaction is L-thyroxine(out) = L-thyroxine(in). The enzyme catalyses prostaglandin E2(out) = prostaglandin E2(in). It catalyses the reaction (4E,15E)-bilirubin IXalpha C8-beta-D-glucuronoside(out) = (4E,15E)-bilirubin IXalpha C8-beta-D-glucuronoside(in). It carries out the reaction bilirubin IXalpha bis-beta-D-glucuronoside(out) = bilirubin IXalpha bis-beta-D-glucuronoside(in). Functionally, mediates the Na(+)-independent uptake of organic anions. Shows broad substrate specificity, can transport both organic anions such as bile acid taurocholate (cholyltaurine) and conjugated steroids (17-beta-glucuronosyl estradiol, dehydroepiandrosterone sulfate (DHEAS), and estrone 3-sulfate), as well as eicosanoid leukotriene C4, prostaglandin E2 and L-thyroxine (T4). Hydrogencarbonate/HCO3(-) acts as the probable counteranion that exchanges for organic anions. Shows a pH-sensitive substrate specificity towards sulfated steroids, taurocholate and T4 which may be ascribed to the protonation state of the binding site and leads to a stimulation of substrate transport in an acidic microenvironment. Involved in the clearance of bile acids and organic anions from the liver. Can take up bilirubin glucuronides from plasma into the liver, contributing to the detoxification-enhancing liver-blood shuttling loop. Transports coproporphyrin I and III, by-products of heme synthesis, and may be involved in their hepatic disposition. May contribute to regulate the transport of organic compounds in testes across the blood-testis-barrier. Can transport HMG-CoA reductase inhibitors (also known as statins) such as pitavastatin, a clinically important class of hypolipidemic drugs. May play an important role in plasma and tissue distribution of the structurally diverse chemotherapeutic drugs methotrexate and paclitaxel. May also transport antihypertension agents, such as the angiotensin-converting enzyme (ACE) inhibitor prodrug enalapril, and the highly selective angiotensin II AT1-receptor antagonist valsartan, in the liver. The protein is Solute carrier organic anion transporter family member 1B3 (SLCO1B3) of Homo sapiens (Human).